The primary structure comprises 342 residues: Aspartate carbamoyltransferase catalytic subunit (342 aa).

The carbamoyl phosphate site is built by arginine 59 and threonine 60. Residue lysine 87 participates in L-aspartate binding. Arginine 109, histidine 142, and glutamine 145 together coordinate carbamoyl phosphate. Residues arginine 182 and arginine 253 each coordinate L-aspartate. Positions 294 and 295 each coordinate carbamoyl phosphate.

This sequence belongs to the aspartate/ornithine carbamoyltransferase superfamily. ATCase family. In terms of assembly, heterododecamer (2C3:3R2) of six catalytic PyrB chains organized as two trimers (C3), and six regulatory PyrI chains organized as three dimers (R2).

The enzyme catalyses carbamoyl phosphate + L-aspartate = N-carbamoyl-L-aspartate + phosphate + H(+). Its pathway is pyrimidine metabolism; UMP biosynthesis via de novo pathway; (S)-dihydroorotate from bicarbonate: step 2/3. In terms of biological role, catalyzes the condensation of carbamoyl phosphate and aspartate to form carbamoyl aspartate and inorganic phosphate, the committed step in the de novo pyrimidine nucleotide biosynthesis pathway. In Synechococcus sp. (strain WH7803), this protein is Aspartate carbamoyltransferase catalytic subunit.